The chain runs to 280 residues: MSLVTSLTYVLPHRLLSSLARALAYSDRPATKQWLIDTVTRKFGVDLSEAQEPDPRAYPTFNAFFTRALKPGARVPDADPAALLMPADGRISQLGPIENGRIFQAKGQSFTAAELLGDEAAAAPFNDGLFATVYLSPKDYHRVHMPWTGTLRETVHVPGRLFSVGPDAVRNVPRLFARNERLVCHFDTDFGPMASVMVGALLVSGVETVWSGVEIPRYGDRITRKDYRGKGIVLEKFAEMARFNYGSTVIVLLPPGVARLDGRLAAETSVRLGQALARRQ.

Active-site charge relay system; for autoendoproteolytic cleavage activity residues include Asp88, His144, and Ser247. The Schiff-base intermediate with substrate; via pyruvic acid; for decarboxylase activity role is filled by Ser247. Position 247 is a pyruvic acid (Ser); by autocatalysis (Ser247).

The protein belongs to the phosphatidylserine decarboxylase family. PSD-B subfamily. Prokaryotic type I sub-subfamily. As to quaternary structure, heterodimer of a large membrane-associated beta subunit and a small pyruvoyl-containing alpha subunit. Pyruvate is required as a cofactor. Is synthesized initially as an inactive proenzyme. Formation of the active enzyme involves a self-maturation process in which the active site pyruvoyl group is generated from an internal serine residue via an autocatalytic post-translational modification. Two non-identical subunits are generated from the proenzyme in this reaction, and the pyruvate is formed at the N-terminus of the alpha chain, which is derived from the carboxyl end of the proenzyme. The autoendoproteolytic cleavage occurs by a canonical serine protease mechanism, in which the side chain hydroxyl group of the serine supplies its oxygen atom to form the C-terminus of the beta chain, while the remainder of the serine residue undergoes an oxidative deamination to produce ammonia and the pyruvoyl prosthetic group on the alpha chain. During this reaction, the Ser that is part of the protease active site of the proenzyme becomes the pyruvoyl prosthetic group, which constitutes an essential element of the active site of the mature decarboxylase.

The protein resides in the cell membrane. It catalyses the reaction a 1,2-diacyl-sn-glycero-3-phospho-L-serine + H(+) = a 1,2-diacyl-sn-glycero-3-phosphoethanolamine + CO2. The protein operates within phospholipid metabolism; phosphatidylethanolamine biosynthesis; phosphatidylethanolamine from CDP-diacylglycerol: step 2/2. Its function is as follows. Catalyzes the formation of phosphatidylethanolamine (PtdEtn) from phosphatidylserine (PtdSer). The sequence is that of Phosphatidylserine decarboxylase proenzyme from Xanthomonas euvesicatoria pv. vesicatoria (strain 85-10) (Xanthomonas campestris pv. vesicatoria).